Consider the following 41-residue polypeptide: Hemoglobin subunit beta (41 aa).

The 41-residue stretch at 1-41 (LGNVLVCVLAHHFGKEFTPQVQAAYQKVVAGVANALAHKYH) folds into the Globin domain. Lysine 39 is subject to N6-acetyllysine.

The protein belongs to the globin family. In terms of assembly, heterotetramer of two alpha chains and two beta chains. As to expression, red blood cells.

Functionally, involved in oxygen transport from the lung to the various peripheral tissues. The sequence is that of Hemoglobin subunit beta (HBB) from Colobus guereza (Mantled guereza).